Here is a 310-residue protein sequence, read N- to C-terminus: 2-dehydropantoate 2-reductase (310 aa).

Residues 9–14 (GVGAIG) and N100 each bind NADP(+). Residue N100 coordinates substrate. K184 functions as the Proton donor in the catalytic mechanism. Substrate contacts are provided by N188, N192, and S259. NADP(+) is bound at residue E270.

This sequence belongs to the ketopantoate reductase family.

It localises to the cytoplasm. It carries out the reaction (R)-pantoate + NADP(+) = 2-dehydropantoate + NADPH + H(+). It functions in the pathway cofactor biosynthesis; (R)-pantothenate biosynthesis; (R)-pantoate from 3-methyl-2-oxobutanoate: step 2/2. Its function is as follows. Catalyzes the NADPH-dependent reduction of ketopantoate into pantoic acid. In Aquifex aeolicus (strain VF5), this protein is 2-dehydropantoate 2-reductase.